The chain runs to 570 residues: MLKNPATKYRPFPAIALADRTWPNKTITRAPIWMSTDLRDGNQALFEPMNAERKMRMFKMLVQIGFKEIEAAFPAASQTDFDFVRELIEGGHIPDGVAIEVLTQAREDLIRRTMESLRGAKRAIIHVYNATAPVFRRTVFNTDREGVKRIAVQSAKLIREIAQTMPETQWTYQYSPEVFSGTELDFALEVCNAVTEVWEPTPEHKIIFNLPATVEMATPNIYADQIEWMHRNLARRDSIILSVHPHNDRGTAVAAAELAVMAGADRVEGCLFGNGERTGNVDIVTLALNLYSQGVDPELDFSHINDVARTCEDCTQLPVHPRHPYVGDLVFTAFSGSHQDAIKKGFAVQKPDAPWEMPYLPIDPADVGRTYDSIIRVNSQSGKGGIAYLLESGYGVAMPRRLQVEFSSTVQKLTDASGREATGADIWALFQQTYLRSDGAIGYVSHRLTERDDGSQHIRLVVNIDDHEHICEGSGNGPLDALVHALSHVLTAPVSIHHYEERALGQGANADAIAFAELAATGVAGSVFGVGVDANLTTASIRAVVGGVNRLIARTGQGMLRRSSAQATVA.

A Pyruvate carboxyltransferase domain is found at 31-305 (PIWMSTDLRD…DPELDFSHIN (275 aa)). Mg(2+)-binding residues include Asp-40, His-244, His-246, and Asn-280. A regulatory domain region spans residues 437–570 (SDGAIGYVSH…RRSSAQATVA (134 aa)).

The protein belongs to the alpha-IPM synthase/homocitrate synthase family. LeuA type 2 subfamily. As to quaternary structure, homodimer. Mg(2+) serves as cofactor.

The protein localises to the cytoplasm. The catalysed reaction is 3-methyl-2-oxobutanoate + acetyl-CoA + H2O = (2S)-2-isopropylmalate + CoA + H(+). The protein operates within amino-acid biosynthesis; L-leucine biosynthesis; L-leucine from 3-methyl-2-oxobutanoate: step 1/4. Catalyzes the condensation of the acetyl group of acetyl-CoA with 3-methyl-2-oxobutanoate (2-ketoisovalerate) to form 3-carboxy-3-hydroxy-4-methylpentanoate (2-isopropylmalate). The chain is 2-isopropylmalate synthase from Ralstonia pickettii (strain 12J).